The sequence spans 396 residues: Elongation factor Tu (396 aa).

Residues 10 to 206 (KPHINVGTIG…QMDAYIPEPQ (197 aa)) form the tr-type G domain. Positions 19–26 (GHVDHGKT) are G1. 19–26 (GHVDHGKT) is a GTP binding site. Mg(2+) is bound at residue threonine 26. Residues 60 to 64 (GITIA) are G2. Residues 81 to 84 (DCPG) form a G3 region. Residues 81–85 (DCPGH) and 136–139 (NKAD) each bind GTP. The tract at residues 136-139 (NKAD) is G4. Positions 174–176 (SAL) are G5.

It belongs to the TRAFAC class translation factor GTPase superfamily. Classic translation factor GTPase family. EF-Tu/EF-1A subfamily. In terms of assembly, monomer.

It is found in the cytoplasm. It carries out the reaction GTP + H2O = GDP + phosphate + H(+). Functionally, GTP hydrolase that promotes the GTP-dependent binding of aminoacyl-tRNA to the A-site of ribosomes during protein biosynthesis. The protein is Elongation factor Tu of Nitrosococcus oceani (strain ATCC 19707 / BCRC 17464 / JCM 30415 / NCIMB 11848 / C-107).